The primary structure comprises 597 residues: Elongation factor 4 (597 aa).

A tr-type G domain is found at 2–184 (KNIRNFSIIA…EIVAKIPAPT (183 aa)). Residues 14-19 (DHGKST) and 131-134 (NKID) contribute to the GTP site.

This sequence belongs to the TRAFAC class translation factor GTPase superfamily. Classic translation factor GTPase family. LepA subfamily.

Its subcellular location is the cell inner membrane. It carries out the reaction GTP + H2O = GDP + phosphate + H(+). Required for accurate and efficient protein synthesis under certain stress conditions. May act as a fidelity factor of the translation reaction, by catalyzing a one-codon backward translocation of tRNAs on improperly translocated ribosomes. Back-translocation proceeds from a post-translocation (POST) complex to a pre-translocation (PRE) complex, thus giving elongation factor G a second chance to translocate the tRNAs correctly. Binds to ribosomes in a GTP-dependent manner. In Neisseria gonorrhoeae (strain ATCC 700825 / FA 1090), this protein is Elongation factor 4.